Consider the following 179-residue polypeptide: Translation initiation factor IF-3 (179 aa).

It belongs to the IF-3 family. In terms of assembly, monomer.

Its subcellular location is the cytoplasm. In terms of biological role, IF-3 binds to the 30S ribosomal subunit and shifts the equilibrium between 70S ribosomes and their 50S and 30S subunits in favor of the free subunits, thus enhancing the availability of 30S subunits on which protein synthesis initiation begins. This is Translation initiation factor IF-3 from Treponema pallidum (strain Nichols).